A 714-amino-acid polypeptide reads, in one-letter code: Fatty acid oxidation complex subunit alpha (714 aa).

An enoyl-CoA hydratase region spans residues 1–190; sequence MEMASAFTLN…KLGLVDDVVP (190 aa). The interval 306 to 714 is 3-hydroxyacyl-CoA dehydrogenase; that stretch reads APLNSVGILG…FWKTTATDLQ (409 aa).

It in the N-terminal section; belongs to the enoyl-CoA hydratase/isomerase family. This sequence in the central section; belongs to the 3-hydroxyacyl-CoA dehydrogenase family. In terms of assembly, heterotetramer of two alpha chains (FadJ) and two beta chains (FadI).

It localises to the cytoplasm. It carries out the reaction a (3S)-3-hydroxyacyl-CoA = a (2E)-enoyl-CoA + H2O. The catalysed reaction is a 4-saturated-(3S)-3-hydroxyacyl-CoA = a (3E)-enoyl-CoA + H2O. The enzyme catalyses a (3S)-3-hydroxyacyl-CoA + NAD(+) = a 3-oxoacyl-CoA + NADH + H(+). It catalyses the reaction (3S)-3-hydroxybutanoyl-CoA = (3R)-3-hydroxybutanoyl-CoA. It functions in the pathway lipid metabolism; fatty acid beta-oxidation. Its function is as follows. Catalyzes the formation of a hydroxyacyl-CoA by addition of water on enoyl-CoA. Also exhibits 3-hydroxyacyl-CoA epimerase and 3-hydroxyacyl-CoA dehydrogenase activities. The chain is Fatty acid oxidation complex subunit alpha from Escherichia coli O17:K52:H18 (strain UMN026 / ExPEC).